Reading from the N-terminus, the 293-residue chain is Elongation factor Ts (293 aa).

An involved in Mg(2+) ion dislocation from EF-Tu region spans residues 80–83; that stretch reads TDFV.

It belongs to the EF-Ts family.

The protein localises to the cytoplasm. Its function is as follows. Associates with the EF-Tu.GDP complex and induces the exchange of GDP to GTP. It remains bound to the aminoacyl-tRNA.EF-Tu.GTP complex up to the GTP hydrolysis stage on the ribosome. The protein is Elongation factor Ts of Staphylococcus aureus (strain Newman).